We begin with the raw amino-acid sequence, 272 residues long: Shikimate dehydrogenase (NADP(+)) (272 aa).

Residues 14–16 and Thr-61 contribute to the shikimate site; that span reads SKS. Residue Lys-65 is the Proton acceptor of the active site. Glu-77 serves as a coordination point for NADP(+). Asn-86 and Asp-102 together coordinate shikimate. NADP(+)-binding positions include 126-130, 149-154, and Met-213; these read GAGGA and NRTVSR. Tyr-215 lines the shikimate pocket. Residue Gly-237 participates in NADP(+) binding.

This sequence belongs to the shikimate dehydrogenase family. Homodimer.

The enzyme catalyses shikimate + NADP(+) = 3-dehydroshikimate + NADPH + H(+). Its pathway is metabolic intermediate biosynthesis; chorismate biosynthesis; chorismate from D-erythrose 4-phosphate and phosphoenolpyruvate: step 4/7. Involved in the biosynthesis of the chorismate, which leads to the biosynthesis of aromatic amino acids. Catalyzes the reversible NADPH linked reduction of 3-dehydroshikimate (DHSA) to yield shikimate (SA). This Shigella flexneri protein is Shikimate dehydrogenase (NADP(+)).